A 261-amino-acid polypeptide reads, in one-letter code: CD40 ligand (261 aa).

At Met1–Lys22 the chain is on the cytoplasmic side. A helical; Signal-anchor for type II membrane protein membrane pass occupies residues Ile23–Leu46. Residues His47–Leu261 lie on the Extracellular side of the membrane. Residues Ile122–Leu261 form the THD domain. A disulfide bond links Cys178 and Cys218. Residue Asn240 is glycosylated (N-linked (GlcNAc...) asparagine).

This sequence belongs to the tumor necrosis factor family. As to quaternary structure, homotrimer. Interacts with CD28. CD40 ligand, soluble form: Exists as either a monomer or a homotrimer. Forms a ternary complex between CD40 and integrins for CD40-CD40LG signaling. Post-translationally, the soluble form derives from the membrane form by proteolytic processing.

The protein localises to the cell membrane. Its subcellular location is the cell surface. It localises to the secreted. In terms of biological role, cytokine that acts as a ligand to CD40/TNFRSF5. Costimulates T-cell proliferation and cytokine production. Its cross-linking on T-cells generates a costimulatory signal which enhances the production of IL4 and IL10 in conjunction with the TCR/CD3 ligation and CD28 costimulation. Induces the activation of NF-kappa-B. Induces the activation of kinases MAPK8 and PAK2 in T-cells. Mediates B-cell proliferation in the absence of co-stimulus as well as IgE production in the presence of IL4. Involved in immunoglobulin class switching. Acts as a ligand for integrins, specifically ITGA5:ITGB1 and ITGAV:ITGB3; both integrins and the CD40 receptor are required for activation of CD40-CD40LG signaling, which have cell-type dependent effects, such as B-cell activation, NF-kappa-B signaling and anti-apoptotic signaling. This Bos taurus (Bovine) protein is CD40 ligand (CD40LG).